Here is a 637-residue protein sequence, read N- to C-terminus: MTHPPDTIVKSILSHISNPCDIQKLSLQDKLTLAEELRSIIIKTVSNNGGHLAPSLGVIELTLALLATFNPAEDKLLWDVGHQTYAWKLLTGRAHNFSTLRKLNGLSGFPKITESQYDHFGAGHAATSISAALGMAMARDLQGLKHHVIAIIGDGSLTAGMAFEGLNQAGAMGRRLIVVLNDNEMSISKNVGALSLFLSRNMERGWVRRVRHEIKDWLKSIPSIGDEVAEYASRTHRSLKTVFTPGILFEAFRFNYIGPVNGHDIESIEKHLAMAASIDDQPVLLHVLTKKGKGYEPAEKNPASYHGLGAFDIQTGIPKSNSQNSPPTYTEVFGKTLCELAEKDKRIVTITAAMASGTGTSLFKAKFPTHFTDVGICEQHAVTFAAGLASQGYKPFVAIYSTFAQRAYDQIIHDVCIQKLPVTFCLDRAGIVGEDGATHHGAFDISFLRCIPNISILAPRDEAELQSAIYTALSFNSPLAIRYPKGNGVGVTLPNESTPLPFEGELLKEGHDAIIIAIGSMVMPAYSAAQQLQEEKNLSIAVFDSRWISPLPQHQLIELANTFNNILLIEENALAGGFSSAVVELFADNQCLHGQRIQRIGIPNYFIDHGSQKELKQCLLLTVDGIKKMLLQMLQPE.

Residues histidine 82 and 123–125 contribute to the thiamine diphosphate site; that span reads GHA. Position 154 (aspartate 154) interacts with Mg(2+). Residues 155–156, asparagine 183, tyrosine 295, and glutamate 378 each bind thiamine diphosphate; that span reads GS. Asparagine 183 contributes to the Mg(2+) binding site.

Belongs to the transketolase family. DXPS subfamily. Homodimer. Mg(2+) serves as cofactor. The cofactor is thiamine diphosphate.

The enzyme catalyses D-glyceraldehyde 3-phosphate + pyruvate + H(+) = 1-deoxy-D-xylulose 5-phosphate + CO2. It functions in the pathway metabolic intermediate biosynthesis; 1-deoxy-D-xylulose 5-phosphate biosynthesis; 1-deoxy-D-xylulose 5-phosphate from D-glyceraldehyde 3-phosphate and pyruvate: step 1/1. Catalyzes the acyloin condensation reaction between C atoms 2 and 3 of pyruvate and glyceraldehyde 3-phosphate to yield 1-deoxy-D-xylulose-5-phosphate (DXP). The chain is 1-deoxy-D-xylulose-5-phosphate synthase from Lawsonia intracellularis (strain PHE/MN1-00).